The sequence spans 392 residues: MSKGQAQQQSAFKQLFTEFFNLGGDFSKVSKDLKKPLKTYVKESYPHFLVTDGYFFVQPHFTKEAVAEFHQKFPNVNIVDLHDKVIVINSWSLELRRVNSAEVFTSYANLEARLVVHSFKPNLQERLNPTRYPVNLFRDDEFKTIIQHFRHQALQQSIAKNTKQESLPDISKLSGADAAGKKTKVDGGIVKTGASKGDEFADFSFKEGSTAVLKIQDIFVQEKGKDALKRIQDQQVESVQVQPKVRGGAKGKKKAATKSATKKTVAAKKTAESADVRKSVDKIVKYTPNKPSSRKETPQKSQSAPAAGKSSAKRTTTGSKTKIPANPSPSGKKSTKTTDQMTMAQFKKYLDWHEKKKGGKTSSGGKVLGKRSAGKASATSGKASKASKRSKK.

A disordered region spans residues 234–392 (QQVESVQVQP…ASKASKRSKK (159 aa)). Basic residues predominate over residues 247–256 (GGAKGKKKAA). Residues 257–268 (TKSATKKTVAAK) are compositionally biased toward low complexity. The span at 269–284 (KTAESADVRKSVDKIV) shows a compositional bias: basic and acidic residues. The segment covering 328 to 343 (SPSGKKSTKTTDQMTM) has biased composition (polar residues). A compositionally biased stretch (low complexity) spans 374 to 384 (GKASATSGKAS).

As to quaternary structure, heterodimer of an alpha and a beta subunit.

Its subcellular location is the nucleus. It is found in the chromosome. It localises to the telomere. May function as protective capping of the single-stranded telomeric overhang. May also participate in telomere length regulation during DNA replication. The sequence is that of Telomere-binding protein subunit beta (STY43) from Stylonychia mytilus (Ciliate).